Reading from the N-terminus, the 683-residue chain is E3 ubiquitin-protein ligase RNF103 (683 aa).

The next 4 helical transmembrane spans lie at Phe6 to Val26, Leu326 to Gln346, Leu366 to Phe386, and Met411 to Ile431. Over residues Glu525–Asn542 the composition is skewed to acidic residues. Residues Glu525–Ser548 are disordered. An RING-type zinc finger spans residues Cys619–Arg661.

Interacts with DERL1 and VCP. Highly expressed in the normal cerebellum but not in the cerebral cortex.

The protein localises to the endoplasmic reticulum membrane. It catalyses the reaction S-ubiquitinyl-[E2 ubiquitin-conjugating enzyme]-L-cysteine + [acceptor protein]-L-lysine = [E2 ubiquitin-conjugating enzyme]-L-cysteine + N(6)-ubiquitinyl-[acceptor protein]-L-lysine.. It participates in protein modification; protein ubiquitination. Functionally, acts as an E2-dependent E3 ubiquitin-protein ligase, probably involved in the ER-associated protein degradation pathway. The chain is E3 ubiquitin-protein ligase RNF103 (Rnf103) from Mus musculus (Mouse).